Reading from the N-terminus, the 522-residue chain is Ribonuclease Y (522 aa).

The chain crosses the membrane as a helical span at residues W2–L22. The 67-residue stretch at L212–D278 folds into the KH domain. Residues A338–A431 enclose the HD domain.

This sequence belongs to the RNase Y family.

Its subcellular location is the cell membrane. Functionally, endoribonuclease that initiates mRNA decay. This Nitratiruptor sp. (strain SB155-2) protein is Ribonuclease Y.